We begin with the raw amino-acid sequence, 226 residues long: UPF0758 protein Daci_1904 (226 aa).

Residues 104–226 (ALASPEAVAR…SLSMAGQGML (123 aa)) form the MPN domain. Residues histidine 175, histidine 177, and aspartate 188 each coordinate Zn(2+). Residues 175–188 (HNHPSGQVQASAAD) carry the JAMM motif motif.

It belongs to the UPF0758 family.

This is UPF0758 protein Daci_1904 from Delftia acidovorans (strain DSM 14801 / SPH-1).